Consider the following 328-residue polypeptide: Glycerophosphodiester phosphodiesterase GDPD4 (328 aa).

Residues 35 to 55 (TILFAVIFLAIFPPLYFHFKL) form a helical membrane-spanning segment. The 240-residue stretch at 73–312 (PLVCAHGGDS…SDPSMFQGLM (240 aa)) folds into the GP-PDE domain.

It belongs to the glycerophosphoryl diester phosphodiesterase family. As to expression, expressed in rosette and cauline leaves.

It is found in the membrane. The enzyme catalyses a sn-glycero-3-phosphodiester + H2O = an alcohol + sn-glycerol 3-phosphate + H(+). This chain is Glycerophosphodiester phosphodiesterase GDPD4, found in Arabidopsis thaliana (Mouse-ear cress).